Reading from the N-terminus, the 134-residue chain is Small ribosomal subunit protein uS8c (134 aa).

This sequence belongs to the universal ribosomal protein uS8 family. Part of the 30S ribosomal subunit.

It localises to the plastid. Its subcellular location is the chloroplast. Its function is as follows. One of the primary rRNA binding proteins, it binds directly to 16S rRNA central domain where it helps coordinate assembly of the platform of the 30S subunit. This Helianthus annuus (Common sunflower) protein is Small ribosomal subunit protein uS8c (rps8).